The chain runs to 71 residues: Small ribosomal subunit protein bS21 (71 aa).

This sequence belongs to the bacterial ribosomal protein bS21 family.

The protein is Small ribosomal subunit protein bS21 of Thioalkalivibrio sulfidiphilus (strain HL-EbGR7).